Consider the following 397-residue polypeptide: Succinate--CoA ligase [ADP-forming] subunit beta (397 aa).

In terms of domain architecture, ATP-grasp spans 9–254 (KALLKSFGAP…TTEEDEKEIE (246 aa)). ATP-binding positions include Lys46, 53–55 (GRG), Glu109, Ala112, and Glu117. Positions 209 and 223 each coordinate Mg(2+). Substrate-binding positions include Asn274 and 331–333 (GIM).

It belongs to the succinate/malate CoA ligase beta subunit family. As to quaternary structure, heterotetramer of two alpha and two beta subunits. Requires Mg(2+) as cofactor.

The catalysed reaction is succinate + ATP + CoA = succinyl-CoA + ADP + phosphate. It catalyses the reaction GTP + succinate + CoA = succinyl-CoA + GDP + phosphate. The protein operates within carbohydrate metabolism; tricarboxylic acid cycle; succinate from succinyl-CoA (ligase route): step 1/1. Succinyl-CoA synthetase functions in the citric acid cycle (TCA), coupling the hydrolysis of succinyl-CoA to the synthesis of either ATP or GTP and thus represents the only step of substrate-level phosphorylation in the TCA. The beta subunit provides nucleotide specificity of the enzyme and binds the substrate succinate, while the binding sites for coenzyme A and phosphate are found in the alpha subunit. The polypeptide is Succinate--CoA ligase [ADP-forming] subunit beta (Mesorhizobium japonicum (strain LMG 29417 / CECT 9101 / MAFF 303099) (Mesorhizobium loti (strain MAFF 303099))).